Reading from the N-terminus, the 112-residue chain is uncharacterized protein (112 aa).

This is an uncharacterized protein from Aquifex aeolicus (strain VF5).